Reading from the N-terminus, the 137-residue chain is Holo-[acyl-carrier-protein] synthase (137 aa).

Positions 8 and 57 each coordinate Mg(2+).

This sequence belongs to the P-Pant transferase superfamily. AcpS family. The cofactor is Mg(2+).

It localises to the cytoplasm. The catalysed reaction is apo-[ACP] + CoA = holo-[ACP] + adenosine 3',5'-bisphosphate + H(+). Functionally, transfers the 4'-phosphopantetheine moiety from coenzyme A to a Ser of acyl-carrier-protein. This is Holo-[acyl-carrier-protein] synthase from Hyphomonas neptunium (strain ATCC 15444).